The sequence spans 528 residues: Serine/threonine-protein kinase akt-2 (528 aa).

A PH domain is found at 12–115; it reads DIVIESWLHK…WIEAIQAVSS (104 aa). A disordered region spans residues 121–153; sequence ENAGNTSMQEEDTNGNPSGESDVNMDATSTRSD. Residues 123–153 are compositionally biased toward polar residues; that stretch reads AGNTSMQEEDTNGNPSGESDVNMDATSTRSD. The Protein kinase domain maps to 180 to 437; the sequence is FDFLKVLGQG…AREVSRAEFF (258 aa). ATP is bound by residues 186 to 194 and Lys209; that span reads LGQGTFGKV. The active-site Proton acceptor is Asp303. The AGC-kinase C-terminal domain maps to 438 to 515; the sequence is KDVDWEATLR…YYVSGSLERS (78 aa).

It belongs to the protein kinase superfamily. AGC Ser/Thr protein kinase family. RAC subfamily. As to quaternary structure, interacts with pdk-1, sgk-1, akt-1 and daf-16. Part of a complex containing sgk-1, akt-1 and akt-2. Mg(2+) is required as a cofactor. In terms of tissue distribution, expressed in neurons, muscle cells of the pharynx, rectal gland cells, and spermatheca.

The catalysed reaction is L-seryl-[protein] + ATP = O-phospho-L-seryl-[protein] + ADP + H(+). The enzyme catalyses L-threonyl-[protein] + ATP = O-phospho-L-threonyl-[protein] + ADP + H(+). Phosphorylated and activated by pdk-1. Its function is as follows. Acts downstream of PI3 kinase age-1 and kinase pdk-1 in the daf-2/insulin receptor-like transduction pathway. Essential role in regulating developmental arrest at the dauer stage. Phosphorylates Forkhead-related daf-16 and the longevity-promoting skn-1 transcription factors, which inhibits their entry into the nucleus and antagonizes their functions. Role in immune function and pathogen resistance. Downstream of age-1 and together with akt-1 and sgk-1, promotes cell survival during embryonic development. Plays a role in maintaining the gonadal basement membrane through antagonizing akt-1 activity. In Caenorhabditis elegans, this protein is Serine/threonine-protein kinase akt-2.